The primary structure comprises 331 residues: Probable allantoicase (331 aa).

Belongs to the allantoicase family.

The catalysed reaction is allantoate + H2O = (S)-ureidoglycolate + urea. It functions in the pathway nitrogen metabolism; (S)-allantoin degradation; (S)-ureidoglycolate from allantoate (aminidohydrolase route): step 1/1. The protein is Probable allantoicase of Pseudomonas fluorescens (strain Pf0-1).